The following is a 323-amino-acid chain: Sphingomyelinase D (323 aa).

A signal peptide spans 1 to 20 (MISLLRLCSFLAAGSILVQG). Residue histidine 59 is part of the active site. The Mg(2+) site is built by glutamate 79, aspartate 81, and aspartate 127. Residues 308–315 (ATNDDNPW) carry the SMD-tail motif.

It belongs to the sphingomyelinase D/phospholipase D family. Mg(2+) serves as cofactor.

The protein resides in the secreted. It catalyses the reaction a sphingomyelin + H2O = an N-acylsphing-4-enine 1-phosphate + choline + H(+). Catalyzes the hydrolysis of sphingomyelin. Sphingomyelinases D are produced by some spider in their venoms, but also by arthropods such as ticks, or pathogenic bacteria and fungi. They might play a role in pathogenicity through different mechanisms, such as membrane destabilization and host cell penetration, but also pulmonary inflammation and cutaneous lesions. This chain is Sphingomyelinase D, found in Trichophyton rubrum (strain ATCC MYA-4607 / CBS 118892) (Athlete's foot fungus).